Consider the following 237-residue polypeptide: tRNA (guanine-N(7)-)-methyltransferase (237 aa).

Glutamate 68, glutamate 93, aspartate 120, and aspartate 143 together coordinate S-adenosyl-L-methionine. The active site involves aspartate 143. Residues lysine 147, aspartate 179, and threonine 216–glutamate 219 each bind substrate.

The protein belongs to the class I-like SAM-binding methyltransferase superfamily. TrmB family.

The enzyme catalyses guanosine(46) in tRNA + S-adenosyl-L-methionine = N(7)-methylguanosine(46) in tRNA + S-adenosyl-L-homocysteine. Its pathway is tRNA modification; N(7)-methylguanine-tRNA biosynthesis. Catalyzes the formation of N(7)-methylguanine at position 46 (m7G46) in tRNA. This chain is tRNA (guanine-N(7)-)-methyltransferase, found in Shewanella halifaxensis (strain HAW-EB4).